We begin with the raw amino-acid sequence, 548 residues long: Synaptic vesicle 2-related protein (548 aa).

Over 1–87 (MEEDLFQLRQ…GFGKFQWKLS (87 aa)) the chain is Cytoplasmic. A phosphoserine mark is found at Ser25 and Ser31. The chain crosses the membrane as a helical span at residues 88 to 108 (VLTGLAWMADAMEMMILSILA). Topologically, residues 109–122 (PQLHCEWRLPSWQV) are vesicular. A helical membrane pass occupies residues 123–143 (ALLTSVVFVGMMSSSTLWGNI). At 144-156 (SDQYGRKTGLKIS) the chain is on the cytoplasmic side. Residues 157–177 (VLWTLYYGILSAFAPVYSWIL) form a helical membrane-spanning segment. The Vesicular portion of the chain corresponds to 178 to 180 (VLR). The chain crosses the membrane as a helical span at residues 181 to 201 (GLVGFGIGGVPQSVTLYAEFL). The Cytoplasmic segment spans residues 202–209 (PMKARAKC). A helical membrane pass occupies residues 210-230 (ILLIEVFWAIGTVFEVVLAVF). The Vesicular portion of the chain corresponds to 231-238 (VMPSLGWR). The helical transmembrane segment at 239 to 259 (WLLILSAVPLLLFAVLCFWLP) threads the bilayer. Residues 260 to 316 (ESARYDVLSGNQEKAIATLKRIATENGAPMPLGKLIISRQEDRGKMRDLFTPHFRWT) are Cytoplasmic-facing. The helical transmembrane segment at 317–337 (TLLLWFIWFSNAFSYYGLVLL) threads the bilayer. The Vesicular portion of the chain corresponds to 338 to 373 (TTELFQAGDVCGISSRKKAVEAKCSLACEYLSEEDY). Residues 374 to 394 (MDLLWTTLSEFPGVLVTLWII) traverse the membrane as a helical segment. The Cytoplasmic segment spans residues 395 to 401 (DRLGRKK). A helical transmembrane segment spans residues 402–422 (TMALCFVIFSFCSLLLFICVG). Residues 423–424 (RN) are Vesicular-facing. A helical membrane pass occupies residues 425 to 445 (VLTLLLFIARAFISGGFQAAY). The Cytoplasmic portion of the chain corresponds to 446 to 457 (VYTPEVYPTATR). Residues 458-478 (ALGLGTCSGMARVGALITPFI) form a helical membrane-spanning segment. The Vesicular segment spans residues 479 to 489 (AQVMLESSVYL). The chain crosses the membrane as a helical span at residues 490–510 (TLAVYSGCCLLAALASCFLPI). Topologically, residues 511–548 (ETKGRGLQESSHREWGQEMVGRGMHGADVTRSNSGSQE) are cytoplasmic. Ser542 is modified (phosphoserine).

Belongs to the major facilitator superfamily.

It is found in the cytoplasmic vesicle. The protein resides in the secretory vesicle. It localises to the synaptic vesicle membrane. This chain is Synaptic vesicle 2-related protein (SVOP), found in Pongo abelii (Sumatran orangutan).